A 394-amino-acid polypeptide reads, in one-letter code: Elongation factor Tu (394 aa).

The 195-residue stretch at 10-204 folds into the tr-type G domain; that stretch reads KPHINVGTIG…ALDKYIPEPQ (195 aa). Residues 19-26 are G1; sequence GHVDHGKT. 19–26 lines the GTP pocket; that stretch reads GHVDHGKT. Mg(2+) is bound at residue Thr26. Residues 60-64 form a G2 region; sequence GITIN. Residues 81-84 form a G3 region; that stretch reads DCPG. GTP contacts are provided by residues 81-85 and 136-139; these read DCPGH and NKCD. The G4 stretch occupies residues 136–139; it reads NKCD. The tract at residues 174 to 176 is G5; sequence SAL.

The protein belongs to the TRAFAC class translation factor GTPase superfamily. Classic translation factor GTPase family. EF-Tu/EF-1A subfamily. In terms of assembly, monomer.

It localises to the cytoplasm. The enzyme catalyses GTP + H2O = GDP + phosphate + H(+). Functionally, GTP hydrolase that promotes the GTP-dependent binding of aminoacyl-tRNA to the A-site of ribosomes during protein biosynthesis. In Hamiltonella defensa subsp. Acyrthosiphon pisum (strain 5AT), this protein is Elongation factor Tu.